The following is a 169-amino-acid chain: Probable inosine/xanthosine triphosphatase (169 aa).

A Mg(2+)-binding site is contributed by Asp58.

This sequence belongs to the YjjX NTPase family. As to quaternary structure, homodimer. Mg(2+) serves as cofactor. It depends on Mn(2+) as a cofactor.

It catalyses the reaction XTP + H2O = XDP + phosphate + H(+). It carries out the reaction ITP + H2O = IDP + phosphate + H(+). Functionally, phosphatase that hydrolyzes non-canonical purine nucleotides such as XTP and ITP to their respective diphosphate derivatives. Probably excludes non-canonical purines from DNA/RNA precursor pool, thus preventing their incorporation into DNA/RNA and avoiding chromosomal lesions. In Archaeoglobus fulgidus (strain ATCC 49558 / DSM 4304 / JCM 9628 / NBRC 100126 / VC-16), this protein is Probable inosine/xanthosine triphosphatase.